We begin with the raw amino-acid sequence, 437 residues long: Branched-chain amino acid transport system 3 carrier protein (437 aa).

12 helical membrane-spanning segments follow: residues 9–29 (ILALGFMTFALFVGAGNIIFP), 40–60 (VWLAALGFLITAVGLPVITVI), 79–99 (YAGGLLAAVCYLAVGPLFAIP), 120–140 (ALFVYSLAYFLLALAISLYPG), 155–175 (ILALAILGVAAFLWPAGPIGT), 189–209 (FVNGYLTMDTLAALVFGIVIV), 226–246 (YAIVAGLIAGVGLVLVYVSLF), 277–297 (LGSSFLAGLIALACLVTAVGL), 316–336 (LVIILAGFSFIVSNLGLTKLI), 342–362 (VLTAIYPPCIVLVALSFCIGL), 369–389 (ILAPVMLVSLAFGVLDALKAA), and 399–419 (LLHLPLAEQGLAWLIPSVATL).

Belongs to the branched chain amino acid transporter family.

The protein resides in the cell inner membrane. Functionally, component of the LIV-III transport system for branched-chain amino acids. BraZ is specific for isoleucine and valine. The LIV-III transport system may be H(+)-coupled. The polypeptide is Branched-chain amino acid transport system 3 carrier protein (braZ) (Pseudomonas aeruginosa (strain ATCC 15692 / DSM 22644 / CIP 104116 / JCM 14847 / LMG 12228 / 1C / PRS 101 / PAO1)).